Reading from the N-terminus, the 269-residue chain is 5'-nucleotidase SurE (269 aa).

Aspartate 11, aspartate 12, serine 43, and asparagine 101 together coordinate a divalent metal cation.

The protein belongs to the SurE nucleotidase family. A divalent metal cation serves as cofactor.

The protein localises to the cytoplasm. It catalyses the reaction a ribonucleoside 5'-phosphate + H2O = a ribonucleoside + phosphate. Nucleotidase that shows phosphatase activity on nucleoside 5'-monophosphates. The chain is 5'-nucleotidase SurE from Prochlorococcus marinus (strain MIT 9515).